A 492-amino-acid chain; its full sequence is Cysteine--tRNA ligase (492 aa).

Cysteine 27 contacts Zn(2+). Positions 29 to 39 (VTVYDLCHLGH) match the 'HIGH' region motif. Residues cysteine 211, histidine 236, and glutamate 240 each contribute to the Zn(2+) site. The short motif at 268–272 (KMSKS) is the 'KMSKS' region element. Position 271 (lysine 271) interacts with ATP.

Belongs to the class-I aminoacyl-tRNA synthetase family. As to quaternary structure, monomer. It depends on Zn(2+) as a cofactor.

It localises to the cytoplasm. It carries out the reaction tRNA(Cys) + L-cysteine + ATP = L-cysteinyl-tRNA(Cys) + AMP + diphosphate. This chain is Cysteine--tRNA ligase, found in Prochlorococcus marinus (strain MIT 9515).